Reading from the N-terminus, the 383-residue chain is Outer membrane protein S2 (383 aa).

The first 21 residues, 1–21 (MKRKVLALVIPALLAAGAAHA), serve as a signal peptide directing secretion.

Belongs to the Gram-negative porin family. Homotrimer.

It is found in the cell outer membrane. Forms pores that allow passive diffusion of small molecules across the outer membrane. The chain is Outer membrane protein S2 (ompS2) from Salmonella typhi.